The primary structure comprises 590 residues: Aspartate--tRNA(Asp/Asn) ligase (590 aa).

Position 169 (Glu-169) interacts with L-aspartate. Residues 193–196 (QLFK) form an aspartate region. Arg-215 contributes to the L-aspartate binding site. ATP contacts are provided by residues 215–217 (RDE) and Gln-224. L-aspartate is bound at residue His-447. Glu-479 contributes to the ATP binding site. Arg-486 contacts L-aspartate. Position 531–534 (531–534 (GWDR)) interacts with ATP. The segment at 556–590 (GGFDPLTAAPAPITPEQRKEAGVDARPQQDLPPQS) is disordered.

The protein belongs to the class-II aminoacyl-tRNA synthetase family. Type 1 subfamily. In terms of assembly, homodimer.

Its subcellular location is the cytoplasm. The enzyme catalyses tRNA(Asx) + L-aspartate + ATP = L-aspartyl-tRNA(Asx) + AMP + diphosphate. Aspartyl-tRNA synthetase with relaxed tRNA specificity since it is able to aspartylate not only its cognate tRNA(Asp) but also tRNA(Asn). Reaction proceeds in two steps: L-aspartate is first activated by ATP to form Asp-AMP and then transferred to the acceptor end of tRNA(Asp/Asn). The polypeptide is Aspartate--tRNA(Asp/Asn) ligase (Nocardioides sp. (strain ATCC BAA-499 / JS614)).